Consider the following 222-residue polypeptide: Triosephosphate isomerase (222 aa).

Position 10–12 (10–12 (NCK)) interacts with substrate. His-93 functions as the Electrophile in the catalytic mechanism. The Proton acceptor role is filled by Glu-141. Substrate-binding positions include Ile-146, Gly-180, and 201 to 202 (AS).

It belongs to the triosephosphate isomerase family. As to quaternary structure, homotetramer; dimer of dimers.

The protein resides in the cytoplasm. The catalysed reaction is D-glyceraldehyde 3-phosphate = dihydroxyacetone phosphate. The protein operates within carbohydrate biosynthesis; gluconeogenesis. It functions in the pathway carbohydrate degradation; glycolysis; D-glyceraldehyde 3-phosphate from glycerone phosphate: step 1/1. Involved in the gluconeogenesis. Catalyzes stereospecifically the conversion of dihydroxyacetone phosphate (DHAP) to D-glyceraldehyde-3-phosphate (G3P). The polypeptide is Triosephosphate isomerase (Cenarchaeum symbiosum (strain A)).